Consider the following 368-residue polypeptide: DNA replication and repair protein RecF (368 aa).

30–37 (GNNAQGKT) lines the ATP pocket.

This sequence belongs to the RecF family.

The protein localises to the cytoplasm. Its function is as follows. The RecF protein is involved in DNA metabolism; it is required for DNA replication and normal SOS inducibility. RecF binds preferentially to single-stranded, linear DNA. It also seems to bind ATP. This chain is DNA replication and repair protein RecF, found in Streptococcus pyogenes serotype M12 (strain MGAS9429).